The following is a 455-amino-acid chain: Chromosomal replication initiator protein DnaA (455 aa).

Residues 1-70 are domain I, interacts with DnaA modulators; sequence MTNETWVQVR…RMRLTEAGSP (70 aa). Positions 70-113 are domain II; sequence PVERLEFAVSNTPRAPLKEVKAAAPAASPARARPAPPEEDLRGA. Positions 87–109 are disordered; that stretch reads KEVKAAAPAASPARARPAPPEED. Low complexity predominate over residues 91 to 102; it reads AAAPAASPARAR. The interval 114-335 is domain III, AAA+ region; the sequence is PLDARFTFDS…GALTRLFAFA (222 aa). Residues Gly-158, Gly-160, Lys-161, and Thr-162 each coordinate ATP. The domain IV, binds dsDNA stretch occupies residues 336 to 455; it reads SLVGREITLD…LQLLRRLLQA (120 aa).

It belongs to the DnaA family. Oligomerizes as a right-handed, spiral filament on DNA at oriC.

The protein resides in the cytoplasm. Its function is as follows. Plays an essential role in the initiation and regulation of chromosomal replication. ATP-DnaA binds to the origin of replication (oriC) to initiate formation of the DNA replication initiation complex once per cell cycle. Binds the DnaA box (a 9 base pair repeat at the origin) and separates the double-stranded (ds)DNA. Forms a right-handed helical filament on oriC DNA; dsDNA binds to the exterior of the filament while single-stranded (ss)DNA is stabiized in the filament's interior. The ATP-DnaA-oriC complex binds and stabilizes one strand of the AT-rich DNA unwinding element (DUE), permitting loading of DNA polymerase. After initiation quickly degrades to an ADP-DnaA complex that is not apt for DNA replication. Binds acidic phospholipids. The polypeptide is Chromosomal replication initiator protein DnaA (Cereibacter sphaeroides (strain ATCC 17029 / ATH 2.4.9) (Rhodobacter sphaeroides)).